We begin with the raw amino-acid sequence, 3948 residues long: Equisetin synthetase eqxS (3948 aa).

Residues 4 to 438 (SEPIAVIGSA…GTNAHAIIEA (435 aa)) form the Ketosynthase family 3 (KS3) domain. Catalysis depends on for beta-ketoacyl synthase activity residues Cys177, His316, and His358. The interval 543 to 847 (IFTGQGTQWP…DTIEAISEGR (305 aa)) is malonyl-CoA:ACP transacylase (MAT) domain. The interval 931 to 1066 (HPLLGRRCHD…AQIKASLGAP (136 aa)) is N-terminal hotdog fold. Residues 931–1233 (HPLLGRRCHD…MELVPFSPAT (303 aa)) are dehydratase (DH) domain. In terms of domain architecture, PKS/mFAS DH spans 931-1235 (HPLLGRRCHD…LVPFSPATPA (305 aa)). His964 (proton acceptor; for dehydratase activity) is an active-site residue. The interval 1081-1235 (LRPVSVDRFY…LVPFSPATPA (155 aa)) is C-terminal hotdog fold. The active-site Proton donor; for dehydratase activity is Asp1141. The interval 1376–1574 (MLQDVYEQGF…GIDTTTPPVH (199 aa)) is methyltransferase (MT) domain. Positions 2105–2277 (TFLLVGLTGE…VAASSIDISS (173 aa)) are ketoreductase (KR) domain. Residues 2389-2464 (AIIKESFIVR…DLVDECLDLL (76 aa)) enclose the Carrier 1 domain. Residue Ser2424 is modified to O-(pantetheine 4'-phosphoryl)serine. A disordered region spans residues 2480–2553 (QAAKPTTVIP…NSTDILAPPR (74 aa)). 2 stretches are compositionally biased toward polar residues: residues 2487 to 2505 (VIPQTPTRVTPPESSQGTS) and 2513 to 2528 (GSDSSHSPIGTPLTSW). Basic and acidic residues predominate over residues 2529–2541 (DRQDSSPPDKSDD). Residues 2564-2991 (SYGQAGFWFL…IRGSDKTVDA (428 aa)) are condensation (C) domain. Residues 3026 to 3424 (QVIQDNPDNI…DGLLFCDGRL (399 aa)) are adenylation (A) (KR) domain. The region spanning 3540–3617 (EILTPSEQRL…AMAGVLEDCG (78 aa)) is the Carrier 2 domain. Residue Ser3577 is modified to O-(pantetheine 4'-phosphoryl)serine. The tract at residues 3653-3870 (LTGSSGYLGR…MPVNEVVEAI (218 aa)) is reductase (RED) domain.

In the C-terminal section; belongs to the NRP synthetase family.

The catalysed reaction is L-serine + 7 malonyl-CoA + acetyl-CoA + 2 S-adenosyl-L-methionine + ATP + 8 NADPH + 11 H(+) = (5S)-3-[(2E,6R,8E,10E,12E)-2,6-dimethyltetradeca-2,8,10,12-tetraenoyl]-5-(hydroxymethyl)pyrrolidine-2,4-dione + AMP + 2 S-adenosyl-L-homocysteine + 7 CO2 + diphosphate + 8 NADP(+) + 8 CoA + 6 H2O. It participates in mycotoxin biosynthesis. Its function is as follows. Hybrid PKS-NRPS synthetase; part of the gene cluster that mediates the biosynthesis of equisetin, a trans-fused decalin-containing tetramic acid with antimicrobial activity. The PKS module of eqxS together with the enoylreductase eqxC catalyze the formation of the polyketide unit which is then conjugated to L-serine by the condensation domain of the eqxS NRPS module. Activity of the Dieckmann cyclase domain (RED) results in release of the Dieckmann product intermediate. Diels-Alderase eqx3 is involved in endo-selective Diels-Alder cycloaddition to form the decalin ring, leading to the production of N-desmethylequisetin also called trichosetin. Subsequent N-methylation is carried out by eqxD to give equisetin. This is Equisetin synthetase eqxS from Fusarium heterosporum.